The sequence spans 504 residues: Maturase K (504 aa).

Belongs to the intron maturase 2 family. MatK subfamily.

The protein resides in the plastid. The protein localises to the chloroplast. In terms of biological role, usually encoded in the trnK tRNA gene intron. Probably assists in splicing its own and other chloroplast group II introns. The chain is Maturase K from Nepenthes alata (Winged pitcher plant).